Consider the following 165-residue polypeptide: Ribosomal RNA large subunit methyltransferase H (165 aa).

Position 109 (G109) interacts with S-adenosyl-L-methionine.

Belongs to the RNA methyltransferase RlmH family. Homodimer.

Its subcellular location is the cytoplasm. The catalysed reaction is pseudouridine(1915) in 23S rRNA + S-adenosyl-L-methionine = N(3)-methylpseudouridine(1915) in 23S rRNA + S-adenosyl-L-homocysteine + H(+). Functionally, specifically methylates the pseudouridine at position 1915 (m3Psi1915) in 23S rRNA. This is Ribosomal RNA large subunit methyltransferase H from Methylorubrum extorquens (strain CM4 / NCIMB 13688) (Methylobacterium extorquens).